We begin with the raw amino-acid sequence, 166 residues long: Orotate phosphoribosyltransferase (166 aa).

5-phospho-alpha-D-ribose 1-diphosphate-binding positions include Arg-83, Lys-84, Arg-86, His-88, and 108–116; that span reads EDVVTTGNS. Orotate is bound by residues Thr-112 and Arg-140.

Belongs to the purine/pyrimidine phosphoribosyltransferase family. PyrE subfamily. Homodimer. Mg(2+) is required as a cofactor.

The catalysed reaction is orotidine 5'-phosphate + diphosphate = orotate + 5-phospho-alpha-D-ribose 1-diphosphate. It participates in pyrimidine metabolism; UMP biosynthesis via de novo pathway; UMP from orotate: step 1/2. In terms of biological role, catalyzes the transfer of a ribosyl phosphate group from 5-phosphoribose 1-diphosphate to orotate, leading to the formation of orotidine monophosphate (OMP). The polypeptide is Orotate phosphoribosyltransferase (Thermoplasma volcanium (strain ATCC 51530 / DSM 4299 / JCM 9571 / NBRC 15438 / GSS1)).